The sequence spans 206 residues: MGKMDEMILVAPRDDVFKKESLTFQGVYSEDSRVAEIMAQIEAAYREMRRGDAEEDPRFKQPIPYVVIKREDEVFLYERLAGGGESRLHNKLSLGFGGHMNAIEGAASFAEVLKLNTDRELEEELQINEEDKQAIVTLGLINDDENSVGKVHIGILSALQLKPGAQVEVKEKEQIAGKWMKVSELKQDDIYNRLETWSQFVVDILE.

In Bacillus subtilis (strain 168), this protein is Protein YmaB (ymaB).